Consider the following 179-residue polypeptide: Large ribosomal subunit protein uL5 (179 aa).

The protein belongs to the universal ribosomal protein uL5 family. As to quaternary structure, part of the 50S ribosomal subunit; part of the 5S rRNA/L5/L18/L25 subcomplex. Contacts the 5S rRNA and the P site tRNA. Forms a bridge to the 30S subunit in the 70S ribosome.

In terms of biological role, this is one of the proteins that bind and probably mediate the attachment of the 5S RNA into the large ribosomal subunit, where it forms part of the central protuberance. In the 70S ribosome it contacts protein S13 of the 30S subunit (bridge B1b), connecting the 2 subunits; this bridge is implicated in subunit movement. Contacts the P site tRNA; the 5S rRNA and some of its associated proteins might help stabilize positioning of ribosome-bound tRNAs. The chain is Large ribosomal subunit protein uL5 from Caldanaerobacter subterraneus subsp. tengcongensis (strain DSM 15242 / JCM 11007 / NBRC 100824 / MB4) (Thermoanaerobacter tengcongensis).